A 420-amino-acid polypeptide reads, in one-letter code: Argininosuccinate synthase (420 aa).

ATP contacts are provided by residues 9–17 (AYSGGLDTS) and Ala-35. 2 residues coordinate L-citrulline: Tyr-86 and Ser-91. 114–122 (SHGCTGKGN) contributes to the ATP binding site. L-aspartate-binding residues include Thr-118, Asn-122, and Asp-123. Residue Asn-122 participates in L-citrulline binding. L-citrulline-binding residues include Arg-126, Ser-179, Ser-188, Glu-273, and Tyr-285.

Belongs to the argininosuccinate synthase family. Type 1 subfamily. In terms of assembly, homotetramer.

The protein resides in the cytoplasm. It catalyses the reaction L-citrulline + L-aspartate + ATP = 2-(N(omega)-L-arginino)succinate + AMP + diphosphate + H(+). The protein operates within amino-acid biosynthesis; L-arginine biosynthesis; L-arginine from L-ornithine and carbamoyl phosphate: step 2/3. Catalyzes the eighth step in arginine biosynthesis. Also has a catabolic function as the first enzyme of citrulline utilization as nitrogen source via arginine and the reactions involved in the arginase pathway. In Saccharomyces cerevisiae (strain ATCC 204508 / S288c) (Baker's yeast), this protein is Argininosuccinate synthase (ARG1).